Consider the following 323-residue polypeptide: Aspartate carbamoyltransferase catalytic subunit (323 aa).

The carbamoyl phosphate site is built by Arg71 and Thr72. L-aspartate is bound at residue Lys99. Residues Arg121, His151, and Gln154 each contribute to the carbamoyl phosphate site. L-aspartate-binding residues include Arg184 and Arg239. Carbamoyl phosphate is bound by residues Gly280 and Pro281.

The protein belongs to the aspartate/ornithine carbamoyltransferase superfamily. ATCase family. Heterododecamer (2C3:3R2) of six catalytic PyrB chains organized as two trimers (C3), and six regulatory PyrI chains organized as three dimers (R2).

It catalyses the reaction carbamoyl phosphate + L-aspartate = N-carbamoyl-L-aspartate + phosphate + H(+). It functions in the pathway pyrimidine metabolism; UMP biosynthesis via de novo pathway; (S)-dihydroorotate from bicarbonate: step 2/3. Functionally, catalyzes the condensation of carbamoyl phosphate and aspartate to form carbamoyl aspartate and inorganic phosphate, the committed step in the de novo pyrimidine nucleotide biosynthesis pathway. This is Aspartate carbamoyltransferase catalytic subunit from Ralstonia nicotianae (strain ATCC BAA-1114 / GMI1000) (Ralstonia solanacearum).